The primary structure comprises 92 residues: Small ribosomal subunit protein uS19 (92 aa).

It belongs to the universal ribosomal protein uS19 family.

Functionally, protein S19 forms a complex with S13 that binds strongly to the 16S ribosomal RNA. The polypeptide is Small ribosomal subunit protein uS19 (Rickettsia typhi (strain ATCC VR-144 / Wilmington)).